A 336-amino-acid polypeptide reads, in one-letter code: PHD finger protein 11 (336 aa).

Residues 1 to 20 (MAEETAPPCGPVSTGGSLSP) form a disordered region. Residues 25–61 (KRTCALCPDGHEWSVIYFAPSANIAAHENCLLYSSGL) form a C2HC pre-PHD-type zinc finger. Residues 91–143 (LKCSLCNKGGATVGCDLSSCRKSYHYVCAKKDHAIPQVDEDLGTYKIFCPEHP) form a PHD-type zinc finger. Disordered regions lie at residues 139–179 (CPEH…KKMK) and 303–336 (DPSG…GDSL). Low complexity predominate over residues 303–314 (DPSGSTSGSLLP).

As to quaternary structure, interacts with BRCA1 and RELA.

The protein localises to the nucleus. Functionally, positive regulator of Th1-type cytokine gene expression. The chain is PHD finger protein 11 (Phf11) from Rattus norvegicus (Rat).